Reading from the N-terminus, the 554-residue chain is Urocanate hydratase (554 aa).

NAD(+)-binding positions include 51-52 (GG), Gln129, 175-177 (GMG), Glu195, 241-242 (NA), 262-266 (QTSAH), 272-273 (YL), and Tyr321. Cys409 is an active-site residue. Gly491 lines the NAD(+) pocket.

It belongs to the urocanase family. The cofactor is NAD(+).

The protein resides in the cytoplasm. It carries out the reaction 4-imidazolone-5-propanoate = trans-urocanate + H2O. The protein operates within amino-acid degradation; L-histidine degradation into L-glutamate; N-formimidoyl-L-glutamate from L-histidine: step 2/3. Its function is as follows. Catalyzes the conversion of urocanate to 4-imidazolone-5-propionate. The chain is Urocanate hydratase from Caulobacter vibrioides (strain ATCC 19089 / CIP 103742 / CB 15) (Caulobacter crescentus).